A 358-amino-acid chain; its full sequence is Mannonate dehydratase (358 aa).

The protein belongs to the mannonate dehydratase family. Requires Fe(2+) as cofactor. Mn(2+) serves as cofactor.

It carries out the reaction D-mannonate = 2-dehydro-3-deoxy-D-gluconate + H2O. It participates in carbohydrate metabolism; pentose and glucuronate interconversion. Functionally, catalyzes the dehydration of D-mannonate. This is Mannonate dehydratase from Lactococcus lactis subsp. cremoris (strain MG1363).